The chain runs to 187 residues: MKKWLVTIAALWLAGCSSGEINKNYYQLPVVQSGTQSTASQGNRLLWVEQVTVPDYLAGNGVVYQTSDVKYVIANNNLWASPLDQQLRNTLVANLSTQLPGWVVASQPLGSAQDTLNVTVTEFNGRYDGKVIVSGEWLLNHQGQLIKRPFRLEGVQTQDGYDEMVKVLAGVWSQEAASIAQEIKRLP.

An N-terminal signal peptide occupies residues 1 to 15 (MKKWLVTIAALWLAG). The N-palmitoyl cysteine moiety is linked to residue C16. C16 is lipidated: S-diacylglycerol cysteine.

In terms of assembly, may form a complex composed of PqiA, PqiB and PqiC. Interacts with PqiB.

The protein resides in the cell outer membrane. Component of a transport pathway that contributes to membrane integrity. The chain is Intermembrane transport lipoprotein PqiC from Escherichia coli (strain K12).